The sequence spans 280 residues: Energy-coupling factor transporter ATP-binding protein EcfA (280 aa).

Residues 5-240 (IDVKNLTYKY…DEMLKLTGLE (236 aa)) form the ABC transporter domain. 40–47 (GHNGSGKS) contributes to the ATP binding site.

Belongs to the ABC transporter superfamily. Energy-coupling factor EcfA family. As to quaternary structure, forms a stable energy-coupling factor (ECF) transporter complex composed of 2 membrane-embedded substrate-binding proteins (S component), 2 ATP-binding proteins (A component) and 2 transmembrane proteins (T component).

The protein localises to the cell membrane. ATP-binding (A) component of a common energy-coupling factor (ECF) ABC-transporter complex. Unlike classic ABC transporters this ECF transporter provides the energy necessary to transport a number of different substrates. This is Energy-coupling factor transporter ATP-binding protein EcfA from Pediococcus pentosaceus (strain ATCC 25745 / CCUG 21536 / LMG 10740 / 183-1w).